The primary structure comprises 361 residues: uncharacterized protein (361 aa).

At T12 the chain carries Phosphothreonine.

The protein resides in the cytoplasm. The protein localises to the nucleus. This is an uncharacterized protein from Schizosaccharomyces pombe (strain 972 / ATCC 24843) (Fission yeast).